The sequence spans 445 residues: MEKIKVALVSLGCDKNRIDSELMLYKLNEEAELVKDPKEAQVIIVNTCGFIETAKEESINTILQMASYKKTHNCKVLVVTGCLTQRYKGELKELIPEMDIMLGVNDYDKLLESIKVFLKSGEKSFYHKYSDTKINEGNRILTTPTYTAYVRIAEGCNNFCTYCAIPRIRGKYRSRKKENILKEVENLAKQGVKEIILIAQDTTMYGIDIHGKKVLHELLRDISKVEGVKWIRLLYCYPEEITEELIEEIKNNDKVCKYLDLPIQQISNSVLKRMGRKTTKETIINIIKKLRKEIEGITLRTSLIVGFPGETEGEFSELKEFVSDIKLDKLGVFKYSKEEGTSAALMEEQIDEEIKEKREEEIMILQQSISKDINKEKIGKIYEVIVEGIKEDMYYGRNYEMSPEIDGEIYFEKDENVKIGDIIKVKVTHSLEYDLIGVVYNELSK.

Positions 4–119 (IKVALVSLGC…LLESIKVFLK (116 aa)) constitute an MTTase N-terminal domain. Positions 13, 48, 82, 156, 160, and 163 each coordinate [4Fe-4S] cluster. Residues 142–372 (TTPTYTAYVR…MILQQSISKD (231 aa)) form the Radical SAM core domain. The TRAM domain maps to 375–441 (KEKIGKIYEV…EYDLIGVVYN (67 aa)).

It belongs to the methylthiotransferase family. RimO subfamily. Requires [4Fe-4S] cluster as cofactor.

It localises to the cytoplasm. It catalyses the reaction L-aspartate(89)-[ribosomal protein uS12]-hydrogen + (sulfur carrier)-SH + AH2 + 2 S-adenosyl-L-methionine = 3-methylsulfanyl-L-aspartate(89)-[ribosomal protein uS12]-hydrogen + (sulfur carrier)-H + 5'-deoxyadenosine + L-methionine + A + S-adenosyl-L-homocysteine + 2 H(+). Its function is as follows. Catalyzes the methylthiolation of an aspartic acid residue of ribosomal protein uS12. The sequence is that of Ribosomal protein uS12 methylthiotransferase RimO from Clostridium botulinum (strain Loch Maree / Type A3).